The primary structure comprises 626 residues: MADQRMDISSTISDFMSPGPTDLLSSSLGTSGVDCNRKRKGSSTDYQESMDTDKDDPHGRLEYTEHQGRIKNAREAHSQIEKRRRDKMNSFIDELASLVPTCNAMSRKLDKLTVLRMAVQHMKTLRGATNPYTEANYKPTFLSDDELKHLILRAADGFLFVVGCDRGKILFVSESVFKILNYSQNDLIGQSLFDYLHPKDIAKVKEQLSSSDTAPRERLIDAKTGLPVKTDITPGPSRLCSGARRSFFCRMKCNRPSVKVEDKDFPSTCSKKKADRKSFCTIHSTGYLKSWPPTKMGLDEDNEADSEGCNLSCLVAIGRLHSHVVPQPAGGDIKVKSTEYVSRHAIDGKFVFVDQRATAILAYLPQELLGTSCYEYFHQDDIGHLAECHRQVLQTREKITTNCYKFKIKDGSFITLRSRWFSFMNPWTKEVEYIVSTNTVVLANVLEGGDPTFPQLTASPHSMDSMLPSGEGGPKKTHPTVPGIPGGTRAGAGKIGRMIAEEIMEIHRIRGSSPSSCGSSPLNITSTPPPDASSPGGKKILNGGTPDIPSSGLLPGQAQENPGYPYSDSSSILGENPHISIDMIDNDQGSSSPSNDEAAMAVIMSLLEADAGLGGPVDFSDLPWPL.

The tract at residues 1–60 (MADQRMDISSTISDFMSPGPTDLLSSSLGTSGVDCNRKRKGSSTDYQESMDTDKDDPHGR) is disordered. At serine 17 the chain carries Phosphoserine; by GSK3-beta. Positions 17–32 (SPGPTDLLSSSLGTSG) are enriched in low complexity. Threonine 21 is subject to Phosphothreonine; by GSK3-beta. Positions 36–41 (NRKRKG) match the Nuclear localization signal motif. Over residues 51 to 60 (DTDKDDPHGR) the composition is skewed to basic and acidic residues. Residues 72–125 (NAREAHSQIEKRRRDKMNSFIDELASLVPTCNAMSRKLDKLTVLRMAVQHMKTL) enclose the bHLH domain. A Phosphoserine modification is found at serine 78. The residue at position 90 (serine 90) is a Phosphoserine; by CK2. A Nuclear export signal 1 motif is present at residues 142-152 (LSDDELKHLIL). One can recognise a PAS 1 domain in the interval 143–215 (SDDELKHLIL…EQLSSSDTAP (73 aa)). Lysine 252 participates in a covalent cross-link: Glycyl lysine isopeptide (Lys-Gly) (interchain with G-Cter in SUMO2 and SUMO3). A Glycyl lysine isopeptide (Lys-Gly) (interchain with G-Cter in SUMO); alternate cross-link involves residue lysine 259. Lysine 259 participates in a covalent cross-link: Glycyl lysine isopeptide (Lys-Gly) (interchain with G-Cter in SUMO2); alternate. The PAS 2 domain maps to 326–396 (PQPAGGDIKV…ECHRQVLQTR (71 aa)). The short motif at 361-369 (LAYLPQELL) is the Nuclear export signal 2 element. Residues 402–445 (NCYKFKIKDGSFITLRSRWFSFMNPWTKEVEYIVSTNTVVLANV) form the PAC domain. 2 disordered regions span residues 458-493 (ASPHSMDSMLPSGEGGPKKTHPTVPGIPGGTRAGAG) and 511-596 (GSSP…PSND). Gly residues predominate over residues 484–493 (IPGGTRAGAG). Residues 508-588 (RIRGSSPSSC…ISIDMIDNDQ (81 aa)) form an interaction with CIART region. A compositionally biased stretch (low complexity) spans 511–521 (GSSPSSCGSSP). Lysine 538 bears the N6-acetyllysine mark.

In terms of assembly, component of the circadian clock oscillator which includes the CRY1/2 proteins, CLOCK or NPAS2, BMAL1 or BMAL2, CSNK1D and/or CSNK1E, TIMELESS and the PER1/2/3 proteins. Forms a heterodimer with CLOCK. The CLOCK-BMAL1 heterodimer is required for E-box-dependent transactivation, for CLOCK nuclear translocation and degradation, and, for phosphorylation of both CLOCK and BMAL1. Part of a nuclear complex which also includes RACK1 and PRKCA; RACK1 and PRKCA are recruited to the complex in a circadian manner. Interacts with NPAS2. Interacts with EZH2. Interacts with SUMO3. Interacts with SIRT1. Interacts with AHR. Interacts with ID1, ID2 and ID3. Interacts with DDX4. Interacts with OGT. Interacts with EED and SUZ12. Interacts with MTA1. Interacts with CIART. Interacts with HSP90. Interacts with KAT2B and EP300. Interacts with BHLHE40/DEC1 and BHLHE41/DEC2. Interacts with RELB and the interaction is enhanced in the presence of CLOCK. Interacts with PER1, PER2, CRY1 and CRY2 and this interaction requires a translocation to the nucleus. Interaction of the CLOCK-BMAL1 heterodimer with PER or CRY inhibits transcription activation. Interaction of the CLOCK-BMAL1 with CRY1 is independent of DNA but with PER2 is off DNA. The CLOCK-BMAL1 heterodimer interacts with GSK3B. Interacts with KDM5A. Interacts with KMT2A; in a circadian manner. Interacts with UBE3A. Interacts with PRKCG. Interacts with MAGEL2. Interacts with NCOA2. Interacts with THRAP3. The CLOCK-BMAL1 heterodimer interacts with PASD1. Interacts with PASD1. Interacts with USP9X. Interacts with PIWIL2 (via PIWI domain). Interacts with HDAC3. Interacts with HNF4A. Ubiquitinated, leading to its proteasomal degradation. Deubiquitinated by USP9X. Post-translationally, O-glycosylated; contains O-GlcNAc. O-glycosylation by OGT prevents protein degradation by inhibiting ubiquitination. It also stabilizes the CLOCK-BMAL1 heterodimer thereby increasing CLOCK-BMAL1-mediated transcription of genes in the negative loop of the circadian clock such as PER1/2/3 and CRY1/2. In terms of processing, acetylated on Lys-538 by CLOCK during the repression phase of the circadian cycle. Acetylation facilitates recruitment of CRY1 protein and initiates the repression phase of the circadian cycle. Acetylated at Lys-538 by KAT5 during the activation phase of the cycle, leading to recruitment of the positive transcription elongation factor b (P-TEFb) and BRD4, followed by productive elongation of circadian transcripts. Deacetylated by SIRT1, which may result in decreased protein stability. Phosphorylated upon dimerization with CLOCK. Phosphorylation enhances the transcriptional activity, alters the subcellular localization and decreases the stability of the CLOCK-BMAL1 heterodimer by promoting its degradation. Phosphorylation shows circadian variations in the liver with a peak between CT10 to CT14. Phosphorylation at Ser-90 by CK2 is essential for its nuclear localization, its interaction with CLOCK and controls CLOCK nuclear entry. Dephosphorylation at Ser-78 is important for dimerization with CLOCK and transcriptional activity. Post-translationally, sumoylated on Lys-259 upon dimerization with CLOCK. Predominantly conjugated to poly-SUMO2/3 rather than SUMO1 and the level of these conjugates undergo rhythmic variation, peaking at CT9-CT12. Sumoylation localizes it exclusively to the PML body and promotes its ubiquitination in the PML body, ubiquitin-dependent proteasomal degradation and the transcriptional activity of the CLOCK-BMAL1 heterodimer. In terms of processing, undergoes lysosome-mediated degradation in a time-dependent manner in the liver. In terms of tissue distribution, highly expressed in the suprachiasmatic nucleus (SCN). Also expressed in all other tissues examined including kidney, intestine, liver, heart, spleen, brain, muscle, lung, harderian gland and eye. Low expression in kidney and spleen.

It is found in the nucleus. It localises to the cytoplasm. The protein resides in the PML body. Functionally, transcriptional activator which forms a core component of the circadian clock. The circadian clock, an internal time-keeping system, regulates various physiological processes through the generation of approximately 24 hour circadian rhythms in gene expression, which are translated into rhythms in metabolism and behavior. It is derived from the Latin roots 'circa' (about) and 'diem' (day) and acts as an important regulator of a wide array of physiological functions including metabolism, sleep, body temperature, blood pressure, endocrine, immune, cardiovascular, and renal function. Consists of two major components: the central clock, residing in the suprachiasmatic nucleus (SCN) of the brain, and the peripheral clocks that are present in nearly every tissue and organ system. Both the central and peripheral clocks can be reset by environmental cues, also known as Zeitgebers (German for 'timegivers'). The predominant Zeitgeber for the central clock is light, which is sensed by retina and signals directly to the SCN. The central clock entrains the peripheral clocks through neuronal and hormonal signals, body temperature and feeding-related cues, aligning all clocks with the external light/dark cycle. Circadian rhythms allow an organism to achieve temporal homeostasis with its environment at the molecular level by regulating gene expression to create a peak of protein expression once every 24 hours to control when a particular physiological process is most active with respect to the solar day. Transcription and translation of core clock components (CLOCK, NPAS2, BMAL1, BMAL2, PER1, PER2, PER3, CRY1 and CRY2) plays a critical role in rhythm generation, whereas delays imposed by post-translational modifications (PTMs) are important for determining the period (tau) of the rhythms (tau refers to the period of a rhythm and is the length, in time, of one complete cycle). A diurnal rhythm is synchronized with the day/night cycle, while the ultradian and infradian rhythms have a period shorter and longer than 24 hours, respectively. Disruptions in the circadian rhythms contribute to the pathology of cardiovascular diseases, cancer, metabolic syndromes and aging. A transcription/translation feedback loop (TTFL) forms the core of the molecular circadian clock mechanism. Transcription factors, CLOCK or NPAS2 and BMAL1 or BMAL2, form the positive limb of the feedback loop, act in the form of a heterodimer and activate the transcription of core clock genes and clock-controlled genes (involved in key metabolic processes), harboring E-box elements (5'-CACGTG-3') within their promoters. The core clock genes: PER1/2/3 and CRY1/2 which are transcriptional repressors form the negative limb of the feedback loop and interact with the CLOCK|NPAS2-BMAL1|BMAL2 heterodimer inhibiting its activity and thereby negatively regulating their own expression. This heterodimer also activates nuclear receptors NR1D1/2 and RORA/B/G, which form a second feedback loop and which activate and repress BMAL1 transcription, respectively. BMAL1 positively regulates myogenesis and negatively regulates adipogenesis via the transcriptional control of the genes of the canonical Wnt signaling pathway. Plays a role in normal pancreatic beta-cell function; regulates glucose-stimulated insulin secretion via the regulation of antioxidant genes NFE2L2/NRF2 and its targets SESN2, PRDX3, CCLC and CCLM. Negatively regulates the mTORC1 signaling pathway; regulates the expression of MTOR and DEPTOR. Controls diurnal oscillations of Ly6C inflammatory monocytes; rhythmic recruitment of the PRC2 complex imparts diurnal variation to chemokine expression that is necessary to sustain Ly6C monocyte rhythms. Regulates the expression of HSD3B2, STAR, PTGS2, CYP11A1, CYP19A1 and LHCGR in the ovary and also the genes involved in hair growth. Plays an important role in adult hippocampal neurogenesis by regulating the timely entry of neural stem/progenitor cells (NSPCs) into the cell cycle and the number of cell divisions that take place prior to cell-cycle exit. Regulates the circadian expression of CIART and KLF11. The CLOCK-BMAL1 heterodimer regulates the circadian expression of SERPINE1/PAI1, VWF, B3, CCRN4L/NOC, NAMPT, DBP, MYOD1, PPARGC1A, PPARGC1B, SIRT1, GYS2, F7, NGFR, GNRHR, BHLHE40/DEC1, ATF4, MTA1, KLF10 and also genes implicated in glucose and lipid metabolism. Promotes rhythmic chromatin opening, regulating the DNA accessibility of other transcription factors. The NPAS2-BMAL1 heterodimer positively regulates the expression of MAOA, F7 and LDHA and modulates the circadian rhythm of daytime contrast sensitivity by regulating the rhythmic expression of adenylate cyclase type 1 (ADCY1) in the retina. The preferred binding motif for the CLOCK-BMAL1 heterodimer is 5'-CACGTGA-3', which contains a flanking adenine nucleotide at the 3-prime end of the canonical 6-nucleotide E-box sequence. CLOCK specifically binds to the half-site 5'-CAC-3', while BMAL1 binds to the half-site 5'-GTGA-3'. The CLOCK-BMAL1 heterodimer also recognizes the non-canonical E-box motifs 5'-AACGTGA-3' and 5'-CATGTGA-3'. Essential for the rhythmic interaction of CLOCK with ASS1 and plays a critical role in positively regulating CLOCK-mediated acetylation of ASS1. Plays a role in protecting against lethal sepsis by limiting the expression of immune checkpoint protein CD274 in macrophages in a PKM2-dependent manner. Regulates the diurnal rhythms of skeletal muscle metabolism via transcriptional activation of genes promoting triglyceride synthesis (DGAT2) and metabolic efficiency (COQ10B). The protein is Basic helix-loop-helix ARNT-like protein 1 (Bmal1) of Nannospalax galili (Northern Israeli blind subterranean mole rat).